Consider the following 292-residue polypeptide: ATP synthase gamma chain (292 aa).

It belongs to the ATPase gamma chain family. In terms of assembly, F-type ATPases have 2 components, CF(1) - the catalytic core - and CF(0) - the membrane proton channel. CF(1) has five subunits: alpha(3), beta(3), gamma(1), delta(1), epsilon(1). CF(0) has three main subunits: a, b and c.

The protein localises to the cell membrane. Its function is as follows. Produces ATP from ADP in the presence of a proton gradient across the membrane. The gamma chain is believed to be important in regulating ATPase activity and the flow of protons through the CF(0) complex. The polypeptide is ATP synthase gamma chain (Streptococcus pneumoniae (strain JJA)).